A 254-amino-acid chain; its full sequence is Adenosylcobinamide-GDP ribazoletransferase (254 aa).

7 helical membrane-spanning segments follow: residues 29–49 (LFWF…LGYF), 50–70 (TSLL…GIAL), 98–118 (IMKD…MMLL), 121–141 (IAIL…GVLL), 170–190 (AGVV…FPLL), 198–218 (LYAV…TGLL), and 230–250 (VLGA…ALSA).

It belongs to the CobS family. Mg(2+) is required as a cofactor.

The protein localises to the cell inner membrane. The catalysed reaction is alpha-ribazole + adenosylcob(III)inamide-GDP = adenosylcob(III)alamin + GMP + H(+). It catalyses the reaction alpha-ribazole 5'-phosphate + adenosylcob(III)inamide-GDP = adenosylcob(III)alamin 5'-phosphate + GMP + H(+). It participates in cofactor biosynthesis; adenosylcobalamin biosynthesis; adenosylcobalamin from cob(II)yrinate a,c-diamide: step 7/7. Its function is as follows. Joins adenosylcobinamide-GDP and alpha-ribazole to generate adenosylcobalamin (Ado-cobalamin). Also synthesizes adenosylcobalamin 5'-phosphate from adenosylcobinamide-GDP and alpha-ribazole 5'-phosphate. The polypeptide is Adenosylcobinamide-GDP ribazoletransferase (Pelodictyon phaeoclathratiforme (strain DSM 5477 / BU-1)).